A 2427-amino-acid polypeptide reads, in one-letter code: Interferon-induced very large GTPase 1 (2427 aa).

The VLIG-type G domain maps to 1485 to 1726 (DKRLFVLSVL…KISDFKFRVQ (242 aa)). GTP-binding positions include 1495–1502 (GLQSSGKS), 1548–1551 (DTEG), and 1625–1628 (TAKD).

It belongs to the TRAFAC class dynamin-like GTPase superfamily. Very large inducible GTPase (VLIG) family. Widely expressed. Expressed at low basal level in lung, heart, thymus and spleen; at still lower level in liver, ovary, kidney and brain. Expressed at very weak level in testis. Undetectable in embryo.

The protein resides in the cytoplasm. The protein localises to the cytosol. Its subcellular location is the nucleus. The sequence is that of Interferon-induced very large GTPase 1 (Gvin1) from Mus musculus (Mouse).